Consider the following 572-residue polypeptide: Urease subunit alpha (572 aa).

One can recognise a Urease domain in the interval 130 to 572 (GGVDTHIHFI…LPMAQRYFLF (443 aa)). Ni(2+)-binding residues include histidine 135, histidine 137, and lysine 218. At lysine 218 the chain carries N6-carboxylysine. Histidine 220 lines the substrate pocket. Histidine 247 and histidine 273 together coordinate Ni(2+). The active-site Proton donor is histidine 321. Aspartate 361 contributes to the Ni(2+) binding site.

Belongs to the metallo-dependent hydrolases superfamily. Urease alpha subunit family. As to quaternary structure, heterotrimer of UreA (gamma), UreB (beta) and UreC (alpha) subunits. Three heterotrimers associate to form the active enzyme. Ni cation is required as a cofactor. Post-translationally, carboxylation allows a single lysine to coordinate two nickel ions.

It is found in the cytoplasm. It carries out the reaction urea + 2 H2O + H(+) = hydrogencarbonate + 2 NH4(+). Its pathway is nitrogen metabolism; urea degradation; CO(2) and NH(3) from urea (urease route): step 1/1. This is Urease subunit alpha from Ralstonia nicotianae (strain ATCC BAA-1114 / GMI1000) (Ralstonia solanacearum).